The chain runs to 271 residues: Probable short-chain type dehydrogenase/reductase VdlC (271 aa).

1-25 (MAVITGASSGIGLECVLMLLNQGYK) serves as a coordination point for NAD(+). Ser-129 is a substrate binding site. Tyr-142 (proton acceptor) is an active-site residue.

This sequence belongs to the short-chain dehydrogenases/reductases (SDR) family.

The chain is Probable short-chain type dehydrogenase/reductase VdlC (vdlC) from Helicobacter pylori (strain J99 / ATCC 700824) (Campylobacter pylori J99).